The chain runs to 700 residues: Eukaryotic peptide chain release factor GTP-binding subunit (700 aa).

The tract at residues 10 to 136 (GQGQGYNQYN…YAAPAQSSSQ (127 aa)) is several sort of repeats. A compositionally biased stretch (low complexity) spans 114 to 123 (QGAQGYNAQQ). The interval 114-250 (QGAQGYNAQQ…TSTGGANSVD (137 aa)) is disordered. The segment covering 131-151 (AQSSSQGMTLKDFQNQQGSTN) has biased composition (polar residues). Positions 137-267 (GMTLKDFQNQ…DEVDEEVVKD (131 aa)) are charged. Basic and acidic residues-rich tracts occupy residues 179–194 (KTEKTDESKEATKTTD) and 204–221 (PKIDDLKISEAEKPKTKE). The segment covering 222–246 (NTPSADDTSSEKTTSAKADTSTGGA) has biased composition (polar residues). Residues 272–498 (KDHVSIIFMG…YLDNMKTTDR (227 aa)) form the tr-type G domain. Residues 281-288 (GHVDAGKS) form a G1 region. 281-288 (GHVDAGKS) is a GTP binding site. The segment at 337–341 (GKTIE) is G2. T355 is subject to Phosphothreonine. Positions 358–361 (DAPG) are G3. Residues 358–362 (DAPGH) and 420–423 (NKMD) each bind GTP. The segment at 420-423 (NKMD) is G4. A G5 region spans residues 462–464 (SGY).

Belongs to the TRAFAC class translation factor GTPase superfamily. Classic translation factor GTPase family. ERF3 subfamily.

The protein localises to the cytoplasm. Functionally, involved in translation termination. Stimulates the activity of ERF1. Binds guanine nucleotides. This chain is Eukaryotic peptide chain release factor GTP-binding subunit (SUP35), found in Kluyveromyces lactis (strain ATCC 8585 / CBS 2359 / DSM 70799 / NBRC 1267 / NRRL Y-1140 / WM37) (Yeast).